Here is a 303-residue protein sequence, read N- to C-terminus: MMRIGLFLLTNLAVLVVFSIVFGILSSVFGLGSVHGAGGLNIASLAVMCAVYGMIGSMISLFLSKWMAKRSTGTVVIEQPRNASEQWLVETVAKQAKAVNIDMPEVGIFDNAQPNAFATGWNKNKALVAVSSGLLHTMTPDEVEAVLAHEIGHVANGDMVTLALIQGVVNAFVMFFARIVGSFVDRVVFKNEDGPGIGYFVTSIVMDILLGFLASAIVMWFSRQREFRADAMGAKLAGRDKMISALNALRPAEARPDQMPENMQAFAISSGQTQGFSIANFFRSHPTLDDRIEALKKYTPGQS.

A run of 2 helical transmembrane segments spans residues 4–24 (IGLFLLTNLAVLVVFSIVFGI) and 42–62 (IASLAVMCAVYGMIGSMISLF). His-149 is a binding site for Zn(2+). Glu-150 is an active-site residue. His-153 contributes to the Zn(2+) binding site. 2 consecutive transmembrane segments (helical) span residues 157-177 (GDMVTLALIQGVVNAFVMFFA) and 200-220 (FVTSIVMDILLGFLASAIVMW). Residue Glu-226 participates in Zn(2+) binding.

It belongs to the peptidase M48B family. Zn(2+) serves as cofactor.

The protein resides in the cell inner membrane. This is Protease HtpX from Psychrobacter sp. (strain PRwf-1).